The primary structure comprises 142 residues: Large-conductance mechanosensitive channel (142 aa).

Helical transmembrane passes span 15–35 (AFVM…GAAF), 38–58 (IVTS…IGNI), and 82–102 (GMFI…FVAI).

This sequence belongs to the MscL family. In terms of assembly, homopentamer.

Its subcellular location is the cell inner membrane. Channel that opens in response to stretch forces in the membrane lipid bilayer. May participate in the regulation of osmotic pressure changes within the cell. This chain is Large-conductance mechanosensitive channel, found in Fusobacterium nucleatum subsp. nucleatum (strain ATCC 25586 / DSM 15643 / BCRC 10681 / CIP 101130 / JCM 8532 / KCTC 2640 / LMG 13131 / VPI 4355).